A 351-amino-acid chain; its full sequence is Protein disulfide isomerase CRELD2 (351 aa).

The signal sequence occupies residues 1–21 (MRPPAPAVLGLLLLLLPTGEA). The short motif at 28–31 (CKRC) is the CXXC element. Disulfide bonds link Cys-28–Cys-31, Cys-137–Cys-151, Cys-145–Cys-163, and Cys-165–Cys-174. The 43-residue stretch at 133–175 (DCLACQGGSERPCSGNGHCVGDGTREGDGSCQCHLGYQGPLCS) folds into the EGF-like 1 domain. The FU 1 repeat unit spans residues 190–237 (HSICSACDEACKTCVGPTNRDCGQCEVGWVRQDDACVDVDECAAEPPP). An N-linked (GlcNAc...) asparagine glycan is attached at Asn-248. The stretch at 250–297 (SFVCEECDPTCMGCTGKGPTQCRECIAGYSKESGQCEDIDECSLAEKP) is one FU 2 repeat. The CXXC signature appears at 260 to 263 (CMGC). 4 disulfides stabilise this stretch: Cys-260–Cys-263, Cys-291–Cys-305, Cys-298–Cys-314, and Cys-316–Cys-327. An EGF-like 2; calcium-binding domain is found at 287–328 (DIDECSLAEKPCLRDNENCYNTPGSFVCVCPDGFEEAEDTCV). The segment at 329-351 (QTRPAGAEATEASPTQPPSREDL) is disordered.

Belongs to the CRELD family. As to quaternary structure, interacts with CHRNA4. Component of a complex containing at least CRELD2, MANF, MATN3 and PDIA4.

Its subcellular location is the endoplasmic reticulum. It carries out the reaction Catalyzes the rearrangement of -S-S- bonds in proteins.. Functionally, protein disulfide isomerase. Might play a role in the unfolded protein response. May regulate transport of alpha4-beta2 neuronal acetylcholine receptor. The sequence is that of Protein disulfide isomerase CRELD2 (CRELD2) from Bos taurus (Bovine).